Here is a 219-residue protein sequence, read N- to C-terminus: MAEITSQMVMQLREKTQVGVLDCKKALAEAEGDLEKAIELLRKKGIMKAGKVKDKVATEGLVGSYIHTGGRIGVLVEVNCQTDFVAKGEEFQQLVRDIAMQIAASPNVEFVSVDDVDQEVKDRELAIEVQREDLLSKPEKIRAQIAQGRVDKLFKERALLEQPFIKDQSISVGELITQKIAKIGENIKVRRFARFVLGEGLEKEEKNFAEEVAAQTGSV.

The segment at 82–85 (TDFV) is involved in Mg(2+) ion dislocation from EF-Tu.

The protein belongs to the EF-Ts family.

The protein resides in the cytoplasm. Its function is as follows. Associates with the EF-Tu.GDP complex and induces the exchange of GDP to GTP. It remains bound to the aminoacyl-tRNA.EF-Tu.GTP complex up to the GTP hydrolysis stage on the ribosome. The chain is Elongation factor Ts from Gloeobacter violaceus (strain ATCC 29082 / PCC 7421).